Consider the following 85-residue polypeptide: Beta-insect depressant toxin Lqh-dprIT3c (85 aa).

The N-terminal stretch at 1-21 is a signal peptide; it reads MKLLLLLTISASMLIEGLVNA. Positions 22 to 82 constitute an LCN-type CS-alpha/beta domain; it reads DGYIRGGDGC…EWDYETNTCG (61 aa). Disulfide bonds link Cys-31/Cys-81, Cys-35/Cys-56, Cys-42/Cys-63, and Cys-46/Cys-65. At Gly-82 the chain carries Glycine amide.

Belongs to the long (4 C-C) scorpion toxin superfamily. Sodium channel inhibitor family. Beta subfamily. As to expression, expressed by the venom gland.

The protein resides in the secreted. Functionally, depressant insect beta-toxins cause a transient contraction paralysis followed by a slow flaccid paralysis. They bind voltage-independently at site-4 of sodium channels (Nav) and block action potentials, primarily by depolarizing the axonal membrane and suppressing the sodium current. This depressant toxin is active only on insects. It is found in a relatively small amount in the venom, and its activity on insects is 10-fold higher compared to other known depressant toxins. The protein is Beta-insect depressant toxin Lqh-dprIT3c of Leiurus hebraeus (Hebrew deathstalker scorpion).